Consider the following 186-residue polypeptide: Ribosome-recycling factor (186 aa).

The protein belongs to the RRF family.

The protein localises to the cytoplasm. Functionally, responsible for the release of ribosomes from messenger RNA at the termination of protein biosynthesis. May increase the efficiency of translation by recycling ribosomes from one round of translation to another. The protein is Ribosome-recycling factor of Paraburkholderia xenovorans (strain LB400).